Here is a 370-residue protein sequence, read N- to C-terminus: 4-hydroxy-3-methylbut-2-en-1-yl diphosphate synthase (flavodoxin) (370 aa).

Residues Cys-270, Cys-273, Cys-305, and Glu-312 each contribute to the [4Fe-4S] cluster site.

Belongs to the IspG family. The cofactor is [4Fe-4S] cluster.

The enzyme catalyses (2E)-4-hydroxy-3-methylbut-2-enyl diphosphate + oxidized [flavodoxin] + H2O + 2 H(+) = 2-C-methyl-D-erythritol 2,4-cyclic diphosphate + reduced [flavodoxin]. It functions in the pathway isoprenoid biosynthesis; isopentenyl diphosphate biosynthesis via DXP pathway; isopentenyl diphosphate from 1-deoxy-D-xylulose 5-phosphate: step 5/6. Functionally, converts 2C-methyl-D-erythritol 2,4-cyclodiphosphate (ME-2,4cPP) into 1-hydroxy-2-methyl-2-(E)-butenyl 4-diphosphate. This chain is 4-hydroxy-3-methylbut-2-en-1-yl diphosphate synthase (flavodoxin), found in Hahella chejuensis (strain KCTC 2396).